The following is a 210-amino-acid chain: MKKGILGRKHGMTQIFDEKGEVIPVTVIEAGPCVVVQKKTVETDGYNAIQVGFGDVKEKRLTKPLIGHFKKAGVPFKRYLREFRLDDISGYEVGSEIKVDIFKPGDRVNVTGISKGKGFAGVVKRYGANRGPMSHGSKYHRRVGSMSATTDPGRTFKGKIMPGHMGHERVTIQNLEVVKVDPELNLLLVKGSVPGPKGSLLIIKDSVKSK.

A disordered region spans residues 131–155 (GPMSHGSKYHRRVGSMSATTDPGRT).

This sequence belongs to the universal ribosomal protein uL3 family. In terms of assembly, part of the 50S ribosomal subunit. Forms a cluster with proteins L14 and L19.

Its function is as follows. One of the primary rRNA binding proteins, it binds directly near the 3'-end of the 23S rRNA, where it nucleates assembly of the 50S subunit. This chain is Large ribosomal subunit protein uL3, found in Thermoanaerobacter sp. (strain X514).